A 401-amino-acid polypeptide reads, in one-letter code: MATKRSVGTLGEADLKGKKVFVRADLNVPLDDAQKITDDTRIRASIPTIKYLLEKGAKVILASHLGRPKGVTPKFSLKPLVARLSELLGLEVVMAPDCIGEEVEKLAAALPDGGVLLLENVRFYKEEEKNDPEFAKKLASVADLYVNDAFGTAHRAHASTEGVTKFLRPSVAGFLMQKELDYLVGAVANPKKPFAAIVGGSKVSSKIGVIESLLAKVDILILGGGMIFTFYKAQGLAVGKSLVEEDKLELATSLIETAKSKGVKLLLPTDVVVADKFAADAESKIVPATAIPDGWMGLDVGPDSIKTFAEALDTTKTVIWNGPMGVFEFEKFAAGTDAIAKQLAELTGKGVTTIIGGGDSVAAVEKAGLADKMSHISTGGGASLELLEGKPLPGVLALDEA.

(2R)-3-phosphoglycerate is bound by residues Ala24, Asp25, Asn27, Arg41, Ser63, His64, Gly66, Arg67, Arg122, His154, and Arg155. Residue Gly200 participates in ADP binding. Residue Gly200 participates in CDP binding. AMP contacts are provided by Lys202 and Lys206. Position 206 (Lys206) interacts with ATP. Gly224 serves as a coordination point for ADP. Gly224 contacts CDP. Positions 225 and 297 each coordinate AMP. Residues Gly225 and Gly297 each contribute to the ATP site. CDP is bound by residues Gly322 and Phe327. Residue Phe327 coordinates ADP. Glu328 is an AMP binding site. 3 residues coordinate ATP: Glu328, Asp359, and Ser360. Residue Asp359 coordinates Mg(2+).

This sequence belongs to the phosphoglycerate kinase family. In terms of assembly, monomer. Mg(2+) is required as a cofactor.

It localises to the cytoplasm. The catalysed reaction is (2R)-3-phosphoglycerate + ATP = (2R)-3-phospho-glyceroyl phosphate + ADP. It participates in carbohydrate degradation; glycolysis; pyruvate from D-glyceraldehyde 3-phosphate: step 2/5. This is Phosphoglycerate kinase, cytosolic from Triticum aestivum (Wheat).